A 477-amino-acid polypeptide reads, in one-letter code: Serine/threonine-protein kinase pakC (477 aa).

The PH domain occupies 13-108 (SPDKEGELKK…WMKAVEKGSE (96 aa)). Residues 112-125 (VSQPFNLKHEVHVD) form the CRIB domain. In terms of domain architecture, Protein kinase spans 204 to 458 (YKNMTKIGEG…ATDLLKHPFM (255 aa)). ATP is bound by residues 210–218 (IGEGAAGEV) and lysine 233. Catalysis depends on aspartate 326, which acts as the Proton acceptor.

This sequence belongs to the protein kinase superfamily. STE Ser/Thr protein kinase family. STE20 subfamily. As to quaternary structure, interacts with GTP-bound racB. Mg(2+) is required as a cofactor.

The protein localises to the cytoplasm. Its subcellular location is the membrane. It carries out the reaction L-seryl-[protein] + ATP = O-phospho-L-seryl-[protein] + ADP + H(+). The enzyme catalyses L-threonyl-[protein] + ATP = O-phospho-L-threonyl-[protein] + ADP + H(+). With respect to regulation, kinase activity is rapidly and transiently increased in response to chemoattractant stimulation. In terms of biological role, has role in the regulation of chemotaxis. In Dictyostelium discoideum (Social amoeba), this protein is Serine/threonine-protein kinase pakC (pakC).